A 219-amino-acid chain; its full sequence is 2-hydroxy-3-keto-5-methylthiopentenyl-1-phosphate phosphatase (219 aa).

This sequence belongs to the HAD-like hydrolase superfamily. MtnX family.

The catalysed reaction is 2-hydroxy-5-methylsulfanyl-3-oxopent-1-enyl phosphate + H2O = 1,2-dihydroxy-5-(methylsulfanyl)pent-1-en-3-one + phosphate. The protein operates within amino-acid biosynthesis; L-methionine biosynthesis via salvage pathway; L-methionine from S-methyl-5-thio-alpha-D-ribose 1-phosphate: step 4/6. In terms of biological role, dephosphorylates 2-hydroxy-3-keto-5-methylthiopentenyl-1-phosphate (HK-MTPenyl-1-P) yielding 1,2-dihydroxy-3-keto-5-methylthiopentene (DHK-MTPene). This chain is 2-hydroxy-3-keto-5-methylthiopentenyl-1-phosphate phosphatase, found in Bacillus thuringiensis (strain Al Hakam).